The following is a 392-amino-acid chain: Lipase (392 aa).

An N-terminal signal peptide occupies residues 1 to 26 (MVSFISISQGVSLCLLVSSMMLGSSA). The propeptide occupies 27–95 (VPVSGKSGSS…GGNLTSIGKR (69 aa)). Residues 50–69 (PLISSRCAPPSNKGSKSDLQ) are disordered. 3 cysteine pairs are disulfide-bonded: Cys-152-Cys-391, Cys-163-Cys-166, and Cys-358-Cys-367. Ser-268 functions as the Nucleophile in the catalytic mechanism. Asp-327 serves as the catalytic Charge relay system. Asp-379 provides a ligand contact to Ca(2+). His-380 (charge relay system) is an active-site residue.

Belongs to the AB hydrolase superfamily. Lipase family.

It is found in the secreted. Its subcellular location is the extracellular space. The catalysed reaction is a triacylglycerol + H2O = a diacylglycerol + a fatty acid + H(+). Lipase activity is maximal at a lipid-water interface (interfacial activation), probably by an induced conformational change that results in an increased accessibility of the active site to the substrate. Hydrolyzes ester bonds of triglycerides as well as of their derived partial glycerides with a strong 1,3-positional specificity. This Rhizopus niveus protein is Lipase.